The following is a 171-amino-acid chain: MVLMIIKGIFRRYEKWNPVHPTYGAFWGMGIGIGCGVGWGPGFGPEVIGYVGAGCGVGFSVGITLAGLGIGLPTNFLLAAPYNTVEATRKGAFNFFGKNLSTNGWSDLMPQIAGLQRQVSEICSGFNKKPHLNNAIDLKSFPLFISHDCGKFGSHLLHVRKGSEDNKSSAM.

This chain is Cadmium-induced protein AS8, found in Arabidopsis thaliana (Mouse-ear cress).